The sequence spans 591 residues: MAERTHACGKVTVEAVGQTVQLKGWVQKRRDLGGLIFIDLRDRTGIVQVVFNPETSKEALEVAETIRSEYVLHVEGTVVERGEGAINDNMATGRIEVQATKVNVLNAAKTTPIIIADDTDASEDVRLKYRYLDLRRPVMFNTFKMRHDVTKTIRNFLDTEEFLEVETPILTKSTPEGARDYLVPSRVHDGEFYALPQSPQLFKQLLMVGGFERYYQVARCFRDEDLRADRQPEFTQIDIEASFLTQDEILDMMERMMTKVMKDAKGVEVSAPFPRMKYADAMARYGSDKPDTRFEMELTDLSEFAAGCGFKVFTSAVESGGQVKAINAKGAASKYSRKDIDALTEFVKVYGAKGLAWLKVEEDGLKGPIAKFFGEEDANVLMTTLEATAGDLLLFVADKKSVVADSLGALRLRLGKELELIDESKFNFLWVTDWPLLEYDEDADRYFAAHHPFTMPFREDVELLETAPEKARAQAYDLVLNGYELGGGSLRIYERDVQEKMFKALGFSQEEAQEQFGFLLEAFEYGTPPHGGIALGLDRLVMLLAGRTNLRDTIAFPKTASASCLLTEAPSPVAEAQLEELNLKLSLKEEK.

An L-aspartate-binding site is contributed by Glu176. The interval 200 to 203 (QLFK) is aspartate. Arg222 contributes to the L-aspartate binding site. ATP-binding positions include 222-224 (RDE) and Gln231. His450 lines the L-aspartate pocket. Position 484 (Glu484) interacts with ATP. An L-aspartate-binding site is contributed by Arg491. 536–539 (GLDR) lines the ATP pocket.

This sequence belongs to the class-II aminoacyl-tRNA synthetase family. Type 1 subfamily. In terms of assembly, homodimer.

The protein resides in the cytoplasm. The enzyme catalyses tRNA(Asx) + L-aspartate + ATP = L-aspartyl-tRNA(Asx) + AMP + diphosphate. In terms of biological role, aspartyl-tRNA synthetase with relaxed tRNA specificity since it is able to aspartylate not only its cognate tRNA(Asp) but also tRNA(Asn). Reaction proceeds in two steps: L-aspartate is first activated by ATP to form Asp-AMP and then transferred to the acceptor end of tRNA(Asp/Asn). The polypeptide is Aspartate--tRNA(Asp/Asn) ligase (Bacillus cereus (strain G9842)).